The sequence spans 290 residues: Phosphoribosylaminoimidazole-succinocarboxamide synthase (290 aa).

Belongs to the SAICAR synthetase family.

The catalysed reaction is 5-amino-1-(5-phospho-D-ribosyl)imidazole-4-carboxylate + L-aspartate + ATP = (2S)-2-[5-amino-1-(5-phospho-beta-D-ribosyl)imidazole-4-carboxamido]succinate + ADP + phosphate + 2 H(+). The protein operates within purine metabolism; IMP biosynthesis via de novo pathway; 5-amino-1-(5-phospho-D-ribosyl)imidazole-4-carboxamide from 5-amino-1-(5-phospho-D-ribosyl)imidazole-4-carboxylate: step 1/2. The protein is Phosphoribosylaminoimidazole-succinocarboxamide synthase of Haemophilus influenzae (strain PittEE).